The sequence spans 110 residues: Small ribosomal subunit protein eS24 (110 aa).

Positions 91–110 are disordered; it reads RNKVEEQAEEAEEAEAGAAE. Acidic residues predominate over residues 97–110; that stretch reads QAEEAEEAEAGAAE.

The protein belongs to the eukaryotic ribosomal protein eS24 family.

The sequence is that of Small ribosomal subunit protein eS24 from Archaeoglobus fulgidus (strain ATCC 49558 / DSM 4304 / JCM 9628 / NBRC 100126 / VC-16).